Consider the following 927-residue polypeptide: Isoleucine--tRNA ligase (927 aa).

A 'HIGH' region motif is present at residues 57–67; it reads PFANGNIHMGH. Residue E553 coordinates L-isoleucyl-5'-AMP. Residues 594–598 carry the 'KMSKS' region motif; sequence KMSKS. K597 serves as a coordination point for ATP. 4 residues coordinate Zn(2+): C886, C889, C906, and C909.

This sequence belongs to the class-I aminoacyl-tRNA synthetase family. IleS type 1 subfamily. Monomer. Zn(2+) is required as a cofactor.

It is found in the cytoplasm. It catalyses the reaction tRNA(Ile) + L-isoleucine + ATP = L-isoleucyl-tRNA(Ile) + AMP + diphosphate. Its function is as follows. Catalyzes the attachment of isoleucine to tRNA(Ile). As IleRS can inadvertently accommodate and process structurally similar amino acids such as valine, to avoid such errors it has two additional distinct tRNA(Ile)-dependent editing activities. One activity is designated as 'pretransfer' editing and involves the hydrolysis of activated Val-AMP. The other activity is designated 'posttransfer' editing and involves deacylation of mischarged Val-tRNA(Ile). This chain is Isoleucine--tRNA ligase, found in Lactobacillus helveticus (strain DPC 4571).